We begin with the raw amino-acid sequence, 442 residues long: MSSRDFSNDLFSINIEENAGCVVSAKVQANPLVTQKCHKEALKTVKKNVVLPGFRKGKAPDNIVESRYSTQVEQELRRLFLRASFEALSQMCDRKPLSPKAVRSSAIDTCNPVNGGSVSFLYEAFPVIPSLPWEQLSLPDPEPVKEISEEDLENGLKNVAYFFATKTPVTRPSQEGDFISLSLYVSKRGDENSTPVAIFENKYFKISEEDMTDSFKARFLNVSTGHRVEEEIGSEDIQSFLNGDLLTFTVNAVIEISSPEMDDEKARQLQAESLEDLKKKLRIQLENQAKEAQHQKRFSDAEDALAQLIDFDLPESLLQEREELLSREKLLNARLVKYCSDSELEEQKQALLEEAKADARKAVKLLFLTQKVFSEKGLSISREELQYMMDVCSRERFGGYPPKDISNEMIQELVLVARDRLTYRKAIEAISSEKKDLEVVPS.

A PPIase FKBP-type domain is found at Gly-176–Pro-259.

Belongs to the FKBP-type PPIase family. Tig subfamily.

It localises to the cytoplasm. The catalysed reaction is [protein]-peptidylproline (omega=180) = [protein]-peptidylproline (omega=0). Functionally, involved in protein export. Acts as a chaperone by maintaining the newly synthesized protein in an open conformation. Functions as a peptidyl-prolyl cis-trans isomerase. The protein is Trigger factor of Chlamydia trachomatis serovar A (strain ATCC VR-571B / DSM 19440 / HAR-13).